The following is a 165-amino-acid chain: Destrin (165 aa).

At Ala2 the chain carries N-acetylalanine. An ADF-H domain is found at 4-153 (GVQVADEVCR…NRACIAEKLG (150 aa)). Positions 30-34 (KKRKK) match the Nuclear localization signal motif.

Belongs to the actin-binding proteins ADF family.

Actin-depolymerizing protein. Severs actin filaments (F-actin) and binds to actin monomers (G-actin). Acts in a pH-independent manner. The protein is Destrin (DSTN) of Gallus gallus (Chicken).